Consider the following 82-residue polypeptide: Small ribosomal subunit protein bS16 (82 aa).

It belongs to the bacterial ribosomal protein bS16 family.

This Sodalis glossinidius (strain morsitans) protein is Small ribosomal subunit protein bS16.